The following is a 177-amino-acid chain: Transcription factor E (177 aa).

In terms of domain architecture, HTH TFE/IIEalpha-type spans 9–91 (VEELLNELVG…YWRINYDKAL (83 aa)).

Belongs to the TFE family. In terms of assembly, monomer. Interaction with RNA polymerase subunits RpoF and RpoE is necessary for Tfe stimulatory transcription activity. Able to interact with Tbp and RNA polymerase in the absence of DNA promoter. Interacts both with the preinitiation and elongation complexes.

In terms of biological role, transcription factor that plays a role in the activation of archaeal genes transcribed by RNA polymerase. Facilitates transcription initiation by enhancing TATA-box recognition by TATA-box-binding protein (Tbp), and transcription factor B (Tfb) and RNA polymerase recruitment. Not absolutely required for transcription in vitro, but particularly important in cases where Tbp or Tfb function is not optimal. It dynamically alters the nucleic acid-binding properties of RNA polymerases by stabilizing the initiation complex and destabilizing elongation complexes. Seems to translocate with the RNA polymerase following initiation and acts by binding to the non template strand of the transcription bubble in elongation complexes. This chain is Transcription factor E, found in Archaeoglobus fulgidus (strain ATCC 49558 / DSM 4304 / JCM 9628 / NBRC 100126 / VC-16).